Here is a 372-residue protein sequence, read N- to C-terminus: Chaperone protein DnaJ (372 aa).

Positions 5 to 70 (DYYELLEISR…EKKSIYDRYG (66 aa)) constitute a J domain. The segment at 134-211 (GCNKEINYKY…CKGTGYEEVK (78 aa)) adopts a CR-type zinc-finger fold. Zn(2+)-binding residues include C147, C150, C163, C166, C185, C188, C199, and C202. 4 CXXCXGXG motif repeats span residues 147-154 (CKPCEGTG), 163-170 (CPTCKGQG), 185-192 (CPRCGGTG), and 199-206 (CKSCKGTG).

Belongs to the DnaJ family. In terms of assembly, homodimer. Zn(2+) serves as cofactor.

It is found in the cytoplasm. Participates actively in the response to hyperosmotic and heat shock by preventing the aggregation of stress-denatured proteins and by disaggregating proteins, also in an autonomous, DnaK-independent fashion. Unfolded proteins bind initially to DnaJ; upon interaction with the DnaJ-bound protein, DnaK hydrolyzes its bound ATP, resulting in the formation of a stable complex. GrpE releases ADP from DnaK; ATP binding to DnaK triggers the release of the substrate protein, thus completing the reaction cycle. Several rounds of ATP-dependent interactions between DnaJ, DnaK and GrpE are required for fully efficient folding. Also involved, together with DnaK and GrpE, in the DNA replication of plasmids through activation of initiation proteins. This Aliarcobacter butzleri (strain RM4018) (Arcobacter butzleri) protein is Chaperone protein DnaJ.